The following is a 366-amino-acid chain: Lipase member J (366 aa).

Ser-141 (nucleophile) is an active-site residue. Active-site charge relay system residues include Asp-312 and His-341.

Belongs to the AB hydrolase superfamily. Lipase family.

The polypeptide is Lipase member J (LIPJ) (Homo sapiens (Human)).